The following is a 238-amino-acid chain: Probable xyloglucan-specific endo-beta-1,4-glucanase A (238 aa).

The N-terminal stretch at 1–18 (MKLSLSVALSLAAATAQA) is a signal peptide. 2 N-linked (GlcNAc...) asparagine glycosylation sites follow: Asn-106 and Asn-171.

It belongs to the glycosyl hydrolase 12 (cellulase H) family.

It localises to the secreted. It carries out the reaction xyloglucan + H2O = xyloglucan oligosaccharides.. Catalyzes endohydrolysis of 1,4-beta-D-glucosidic linkages in xyloglucan with retention of the beta-configuration of the glycosyl residues. Specific for xyloglucan and does not hydrolyze other cell wall components. This is Probable xyloglucan-specific endo-beta-1,4-glucanase A (xgeA) from Aspergillus fumigatus (strain CBS 144.89 / FGSC A1163 / CEA10) (Neosartorya fumigata).